The sequence spans 1240 residues: MGKEEEKESGRNKMNCFGSVRSIFMHADGVDWLLMGLGLIGAVGDGFTTPLVLLITSKLMNNIGGSSFNTDTFMQSISKNSVALLYVACGSWVVCFLEGYCWTRTGERQTARMREKYLRAVLRQDVGYFDLHVTSTSDVITSVSSDSFVIQDVLSEKLPNFLMSASTFVGSYIVGFILLWRLAIVGLPFIVLLVIPGLMYGRALISISRKIREEYNEAGFVAEQAISSVRTVYAFSGERKTISKFSTALQGSVKLGIKQGLAKGITIGSNGITFAMWGFMSWYGSRMVMYHGAQGGTVFAVAAAIAIGGVSLGGGLSNLKYFFEAASVGERIMEVINRVPKIDSDNPDGHKLEKIRGEVEFKNVKFVYPSRLETSIFDDFCLRVPSGKTVALVGGSGSGKSTVISLLQRFYDPLAGEILIDGVSIDKLQVKWLRSQMGLVSQEPALFATTIKENILFGKEDASMDDVVEAAKASNAHNFISQLPNGYETQVGERGVQMSGGQKQRIAIARAIIKSPTILLLDEATSALDSESERVVQEALENASIGRTTILIAHRLSTIRNADVISVVKNGHIVETGSHDELMENIDGQYSTLVHLQQIEKQDINVSVKIGPISDPSKDIRNSSRVSTLSRSSSANSVTGPSTIKNLSEDNKPQLPSFKRLLAMNLPEWKQALYGCISATLFGAIQPAYAYSLGSMVSVYFLTSHDEIKEKTRIYALSFVGLAVLSFLINISQHYNFAYMGEYLTKRIRERMLSKVLTFEVGWFDRDENSSGAICSRLAKDANVVRSLVGDRMALVVQTVSAVTIAFTMGLVIAWRLALVMIAVQPVIIVCFYTRRVLLKSMSKKAIKAQDESSKLAAEAVSNVRTITAFSSQERIMKMLEKAQESPRRESIRQSWFAGFGLAMSQSLTSCTWALDFWYGGRLIQDGYITAKALFETFMILVSTGRVIADAGSMTTDLAKGSDAVGSVFAVLDRYTSIDPEDPDGYETERITGQVEFLDVDFSYPTRPDVIIFKNFSIKIEEGKSTAIVGPSGSGKSTIIGLIERFYDPLKGIVKIDGRDIRSYHLRSLRRHIALVSQEPTLFAGTIRENIIYGGVSDKIDEAEIIEAAKAANAHDFITSLTEGYDTYCGDRGVQLSGGQKQRIAIARAVLKNPSVLLLDEATSALDSQSERVVQDALERVMVGRTSVVIAHRLSTIQNCDAIAVLDKGKLVERGTHSSLLSKGPTGIYFSLVSLQTTSG.

6 helical membrane-spanning segments follow: residues 35-55 (MGLG…VLLI), 82-102 (VALL…GYCW), 158-180 (LPNF…ILLW), 184-206 (IVGL…ALIS), 264-284 (GITI…SWYG), and 296-316 (GTVF…GGGL). Residues 35-324 (MGLGLIGAVG…GLSNLKYFFE (290 aa)) form the ABC transmembrane type-1 1 domain. Positions 359–595 (VEFKNVKFVY…IDGQYSTLVH (237 aa)) constitute an ABC transporter 1 domain. 394-401 (GGSGSGKS) lines the ATP pocket. N542, N605, and N622 each carry an N-linked (GlcNAc...) asparagine glycan. Residues 617–646 (SKDIRNSSRVSTLSRSSSANSVTGPSTIKN) form a disordered region. Residues 623 to 639 (SSRVSTLSRSSSANSVT) are compositionally biased toward low complexity. A glycan (N-linked (GlcNAc...) asparagine) is linked at N646. The ABC transmembrane type-1 2 domain occupies 672-960 (ALYGCISATL…AGSMTTDLAK (289 aa)). Transmembrane regions (helical) follow at residues 681 to 701 (LFGA…SVYF) and 714 to 734 (IYAL…ISQH). N769 is a glycosylation site (N-linked (GlcNAc...) asparagine). 4 helical membrane passes run 794 to 813 (ALVV…GLVI), 817 to 839 (LALV…RVLL), 895 to 915 (SWFA…TWAL), and 923 to 943 (LIQD…ILVS). Positions 995-1233 (VEFLDVDFSY…GPTGIYFSLV (239 aa)) constitute an ABC transporter 2 domain. N-linked (GlcNAc...) asparagine glycosylation is present at N1015. Residue 1030–1037 (GPSGSGKS) coordinates ATP.

Belongs to the ABC transporter superfamily. ABCB family. Multidrug resistance exporter (TC 3.A.1.201) subfamily.

The protein localises to the membrane. The chain is ABC transporter B family member 15 (ABCB15) from Arabidopsis thaliana (Mouse-ear cress).